The primary structure comprises 360 residues: Phenylalanine--tRNA ligase alpha subunit (360 aa).

Glu264 is a Mg(2+) binding site.

Belongs to the class-II aminoacyl-tRNA synthetase family. Phe-tRNA synthetase alpha subunit type 1 subfamily. As to quaternary structure, tetramer of two alpha and two beta subunits. Mg(2+) is required as a cofactor.

The protein resides in the cytoplasm. The catalysed reaction is tRNA(Phe) + L-phenylalanine + ATP = L-phenylalanyl-tRNA(Phe) + AMP + diphosphate + H(+). In Streptomyces avermitilis (strain ATCC 31267 / DSM 46492 / JCM 5070 / NBRC 14893 / NCIMB 12804 / NRRL 8165 / MA-4680), this protein is Phenylalanine--tRNA ligase alpha subunit.